Reading from the N-terminus, the 184-residue chain is ADP-ribosylation factor-like protein 8c (184 aa).

The segment at residues 1–18 is an intramembrane region (note=Mediates targeting to membranes); that stretch reads MGLWDSLLNWLRSLFFKQ. Residues 29–34, 48–51, 70–74, and 129–132 contribute to the GTP site; these read NAGKTS, MIPT, DLGGQ, and NKID.

Belongs to the small GTPase superfamily. Arf family. In terms of assembly, interacts with tubulin.

It localises to the late endosome membrane. It is found in the lysosome membrane. The protein localises to the cytoplasm. The protein resides in the cytoskeleton. Its subcellular location is the spindle. Functionally, may play a role in lysosome motility. May play a role in chromosome segregation. (Microbial infection) Component of tomato mosaic virus (ToMV) RNA replication complexes. Required for tobamovirus multiplication, especially for efficient negative-strand RNA synthesis and viral RNA capping. This is ADP-ribosylation factor-like protein 8c from Arabidopsis thaliana (Mouse-ear cress).